A 212-amino-acid chain; its full sequence is Ribosomal RNA small subunit methyltransferase G (212 aa).

S-adenosyl-L-methionine is bound by residues glycine 80, leucine 85, 131-132 (AE), and arginine 146.

The protein belongs to the methyltransferase superfamily. RNA methyltransferase RsmG family.

The protein localises to the cytoplasm. The enzyme catalyses guanosine(527) in 16S rRNA + S-adenosyl-L-methionine = N(7)-methylguanosine(527) in 16S rRNA + S-adenosyl-L-homocysteine. Specifically methylates the N7 position of guanine in position 527 of 16S rRNA. The polypeptide is Ribosomal RNA small subunit methyltransferase G (Xanthomonas oryzae pv. oryzae (strain MAFF 311018)).